Here is a 2609-residue protein sequence, read N- to C-terminus: Mycosubtilin synthase subunit C (2609 aa).

A domain 1 (D-serine-activating) region spans residues 258-1628 (PREKTIHQLF…RVCAQPEMTV (1371 aa)). The segment at 288–695 (TYQELNEKAN…HIPSIQESIV (408 aa)) is adenylation 1. Residues 771 to 845 (APRTELEKIL…ELVPYVEPVT (75 aa)) enclose the Carrier 1 domain. Position 806 is an O-(pantetheine 4'-phosphoryl)serine (serine 806). Positions 853-1312 (IKGPALLTPI…EISIDELDQF (460 aa)) are epimerization 1. Positions 1322–1623 (IENIYPLTPM…NTIPVRVCAQ (302 aa)) are condensation 1. The domain 2 (isoleucine-activating) stretch occupies residues 1778–2359 (PKEKTIYQLF…AHAIQAAALP (582 aa)). Residues 1808–2205 (TYRQLNEQAN…LVESVKEAVV (398 aa)) form an adenylation 2 region. A Carrier 2 domain is found at 2282 to 2357 (APRTLIEKQL…TMAHAIQAAA (76 aa)). Position 2317 is an O-(pantetheine 4'-phosphoryl)serine (serine 2317). The tract at residues 2375 to 2581 (IPVFCFPPLI…ENMSTIRSIM (207 aa)) is thioesterase.

The protein belongs to the ATP-dependent AMP-binding enzyme family. Pantetheine 4'-phosphate serves as cofactor.

Its function is as follows. This protein is a multifunctional enzyme, able to activate and polymerize the amino acids Ser and Asn as part of the synthesis of mycosubtilin. The Ser residue is further epimerized to the D-isomer form. The activation sites for these amino acids consist of individual domains. In Bacillus subtilis, this protein is Mycosubtilin synthase subunit C (mycC).